The primary structure comprises 430 residues: Putative FBD-associated F-box protein At5g56440 (430 aa).

The 49-residue stretch at 1–49 (MDRISLLPDDVVFKILSFVPTKVVVSTNLLSKRWRYLWKHVPKLDYRDP) folds into the F-box domain. One can recognise an FBD domain in the interval 349–399 (QWEQPSSVPKCLISSLETVEWIDYKGREVEKKVVMYLLENSRQLKTMAIRS).

This Arabidopsis thaliana (Mouse-ear cress) protein is Putative FBD-associated F-box protein At5g56440.